A 245-amino-acid chain; its full sequence is Exosome complex component RRP41 (245 aa).

The residue at position 2 (Ala-2) is an N-acetylalanine.

This sequence belongs to the RNase PH family. Component of the RNA exosome core complex (Exo-9), composed of EXOSC1, EXOSC2, EXOSC3, EXOSC4, EXOSC5, EXOSC6, EXOSC7, EXOSC8 and EXOSC9; within the complex interacts with EXOSC2, EXOSC7 and EXOSC9. The catalytically inactive RNA exosome core complex (Exo-9) associates with the catalytic subunit EXOSC10/RRP6. Exo-9 may associate with DIS3 to form the nucleolar exosome complex, or DIS3L to form the cytoplasmic exosome complex. Exo-9 is formed by a hexameric base ring consisting of the heterodimers EXOSC4-EXOSC9, EXOSC5-EXOSC8 and EXOSC6-EXOSC7, and a cap ring consisting of EXOSC1, EXOSC2 and EXOSC3. The RNA exosome complex associates with cofactors C1D/RRP47, MPHOSPH6/MPP6 and MTREX/MTR4. Interacts with DDX60. Interacts with DIS3; the interaction is direct.

The protein resides in the cytoplasm. It is found in the nucleus. Its subcellular location is the nucleolus. It localises to the nucleoplasm. In terms of biological role, non-catalytic component of the RNA exosome complex which has 3'-&gt;5' exoribonuclease activity and participates in a multitude of cellular RNA processing and degradation events. In the nucleus, the RNA exosome complex is involved in proper maturation of stable RNA species such as rRNA, snRNA and snoRNA, in the elimination of RNA processing by-products and non-coding 'pervasive' transcripts, such as antisense RNA species and promoter-upstream transcripts (PROMPTs), and of mRNAs with processing defects, thereby limiting or excluding their export to the cytoplasm. The RNA exosome may be involved in Ig class switch recombination (CSR) and/or Ig variable region somatic hypermutation (SHM) by targeting AICDA deamination activity to transcribed dsDNA substrates. In the cytoplasm, the RNA exosome complex is involved in general mRNA turnover and specifically degrades inherently unstable mRNAs containing AU-rich elements (AREs) within their 3' untranslated regions, and in RNA surveillance pathways, preventing translation of aberrant mRNAs. It seems to be involved in degradation of histone mRNA. The catalytic inactive RNA exosome core complex of 9 subunits (Exo-9) is proposed to play a pivotal role in the binding and presentation of RNA for ribonucleolysis, and to serve as a scaffold for the association with catalytic subunits and accessory proteins or complexes. EXOSC4 binds to ARE-containing RNAs. The protein is Exosome complex component RRP41 (EXOSC4) of Bos taurus (Bovine).